The primary structure comprises 233 residues: Uracil-DNA glycosylase (233 aa).

The active-site Proton acceptor is the D70.

Belongs to the uracil-DNA glycosylase (UDG) superfamily. UNG family.

The protein localises to the cytoplasm. The enzyme catalyses Hydrolyzes single-stranded DNA or mismatched double-stranded DNA and polynucleotides, releasing free uracil.. Its function is as follows. Excises uracil residues from the DNA which can arise as a result of misincorporation of dUMP residues by DNA polymerase or due to deamination of cytosine. This is Uracil-DNA glycosylase from Helicobacter pylori (strain G27).